We begin with the raw amino-acid sequence, 208 residues long: Glutathione S-transferase P (208 aa).

One can recognise a GST N-terminal domain in the interval 1–78 (MTLKLTYFDI…HLARLNGLNG (78 aa)). Glutathione-binding positions include Tyr-7, Trp-38, Lys-42, 49-50 (QV), and 62-63 (QS). One can recognise a GST C-terminal domain in the interval 80–202 (NETETTFIDM…NKRAAINPPV (123 aa)).

It belongs to the GST superfamily. Pi family. Homodimer. Expressed in dopaminergic (DA) neuron (at protein levels).

It carries out the reaction RX + glutathione = an S-substituted glutathione + a halide anion + H(+). Conjugation of reduced glutathione to a wide number of exogenous and endogenous hydrophobic electrophiles. Prevents dopaminergic CEP neuron degeneration in response to Mn(2+). This chain is Glutathione S-transferase P (gst-1), found in Caenorhabditis elegans.